The primary structure comprises 211 residues: tRNA (guanine-N(7)-)-methyltransferase (211 aa).

S-adenosyl-L-methionine-binding residues include E44, D69, D96, and D118. Residue D118 is part of the active site. K122 contributes to the substrate binding site. The interaction with RNA stretch occupies residues 124–129; that stretch reads RHEKRR. Residues D154 and 191–194 each bind substrate; that span reads TEYE.

The protein belongs to the class I-like SAM-binding methyltransferase superfamily. TrmB family.

It catalyses the reaction guanosine(46) in tRNA + S-adenosyl-L-methionine = N(7)-methylguanosine(46) in tRNA + S-adenosyl-L-homocysteine. The protein operates within tRNA modification; N(7)-methylguanine-tRNA biosynthesis. In terms of biological role, catalyzes the formation of N(7)-methylguanine at position 46 (m7G46) in tRNA. This is tRNA (guanine-N(7)-)-methyltransferase from Streptococcus equi subsp. zooepidemicus (strain H70).